A 480-amino-acid chain; its full sequence is Glutamate--tRNA ligase (480 aa).

The 'HIGH' region signature appears at 12 to 22; the sequence is PSPTGAPHLGL. A 'KMSKS' region motif is present at residues 255-259; it reads KLSKR. Position 258 (K258) interacts with ATP.

The protein belongs to the class-I aminoacyl-tRNA synthetase family. Glutamate--tRNA ligase type 1 subfamily. In terms of assembly, monomer.

The protein localises to the cytoplasm. It catalyses the reaction tRNA(Glu) + L-glutamate + ATP = L-glutamyl-tRNA(Glu) + AMP + diphosphate. Its function is as follows. Catalyzes the attachment of glutamate to tRNA(Glu) in a two-step reaction: glutamate is first activated by ATP to form Glu-AMP and then transferred to the acceptor end of tRNA(Glu). The sequence is that of Glutamate--tRNA ligase from Tropheryma whipplei (strain TW08/27) (Whipple's bacillus).